A 139-amino-acid chain; its full sequence is 6,7-dimethyl-8-ribityllumazine synthase (139 aa).

5-amino-6-(D-ribitylamino)uracil is bound by residues phenylalanine 13, 45-47 (VFD), and 69-71 (AVI). Residue 74–75 (AT) coordinates (2S)-2-hydroxy-3-oxobutyl phosphate. Catalysis depends on histidine 77, which acts as the Proton donor. Position 102 (leucine 102) interacts with 5-amino-6-(D-ribitylamino)uracil. Arginine 117 lines the (2S)-2-hydroxy-3-oxobutyl phosphate pocket.

This sequence belongs to the DMRL synthase family.

It catalyses the reaction (2S)-2-hydroxy-3-oxobutyl phosphate + 5-amino-6-(D-ribitylamino)uracil = 6,7-dimethyl-8-(1-D-ribityl)lumazine + phosphate + 2 H2O + H(+). It participates in cofactor biosynthesis; riboflavin biosynthesis; riboflavin from 2-hydroxy-3-oxobutyl phosphate and 5-amino-6-(D-ribitylamino)uracil: step 1/2. Functionally, catalyzes the formation of 6,7-dimethyl-8-ribityllumazine by condensation of 5-amino-6-(D-ribitylamino)uracil with 3,4-dihydroxy-2-butanone 4-phosphate. This is the penultimate step in the biosynthesis of riboflavin. This is 6,7-dimethyl-8-ribityllumazine synthase from Methanothermobacter thermautotrophicus (strain ATCC 29096 / DSM 1053 / JCM 10044 / NBRC 100330 / Delta H) (Methanobacterium thermoautotrophicum).